The sequence spans 781 residues: Toll-like receptor 2 type-2 (781 aa).

Positions 1–24 (MHTWKMWAICTALAAHLPEEQALR) are cleaved as a signal peptide. At 25-585 (QACLSCDATQ…QLSLMECHRS (561 aa)) the chain is on the extracellular side. C30 and C36 form a disulfide bridge. N37 is a glycosylation site (N-linked (GlcNAc...) asparagine). LRR repeat units follow at residues 53 to 74 (KITV…DLQK), 77 to 98 (NLRT…SFGS), 101 to 122 (KLEL…WFGP), 125 to 146 (SLQH…SPFS), 150 to 171 (NLSS…NFEG), and 174 to 195 (FLNT…SLKS). Residue N109 is glycosylated (N-linked (GlcNAc...) asparagine). N-linked (GlcNAc...) asparagine glycans are attached at residues N150, N184, N301, and N313. C350 and C379 are joined by a disulfide. LRR repeat units lie at residues 358–378 (SLEY…EHSA), 385–406 (SLQT…GKSL), 411–432 (NLNL…CEWP), 434–455 (NLKY…IPST), 456–474 (LEVL…LQLP), 475–496 (FLKE…TDIP), and 497–518 (NLVA…EFES). N390 carries N-linked (GlcNAc...) asparagine glycosylation. C429 and C451 are disulfide-bonded. N439 carries N-linked (GlcNAc...) asparagine glycosylation. In terms of domain architecture, LRRCT spans 530-584 (NNFICSCEFLSFIHHEAGIAQVLVGWPESYICDSPLTVRGAQVGSVQLSLMECHR). A helical membrane pass occupies residues 586–606 (LLVSLICTLVFLFILILVVVG). The Cytoplasmic segment spans residues 607–781 (YKYHAVWYMR…WENLKAALKS (175 aa)). The TIR domain maps to 636–779 (ICYDAFVSYS…MFWENLKAAL (144 aa)).

Belongs to the Toll-like receptor family. Binds MYD88 (via TIR domain). In terms of processing, N-glycosylated. Highly expressed in ovary. Also detected in brain, heart, lung, liver, spleen and kidney, and at low levels in gizzard, muscle, testis and proventriculus.

The protein localises to the membrane. Its function is as follows. Participates in the innate immune response to microbial agents. Acts via MYD88 and TRAF6, leading to NF-kappa-B activation, cytokine secretion and the inflammatory response. Mediates the response to mycoplasmal macrophage-activating lipopeptide-2kD (MALP-2). The chain is Toll-like receptor 2 type-2 (TLR2-2) from Gallus gallus (Chicken).